We begin with the raw amino-acid sequence, 492 residues long: Trigger factor (492 aa).

The PPIase FKBP-type domain maps to 169 to 254 (GDRVSIDYVG…VKEVSKPGEL (86 aa)). Residues 441 to 492 (LMADDEDAETTTKAKPAKKAAAKKAEAKANEDEAEEPKKKAAPKKKAAKDAE) are disordered. The span at 463 to 479 (KKAEAKANEDEAEEPKK) shows a compositional bias: basic and acidic residues. A compositionally biased stretch (basic residues) spans 480–492 (KAAPKKKAAKDAE).

The protein belongs to the FKBP-type PPIase family. Tig subfamily.

It is found in the cytoplasm. The catalysed reaction is [protein]-peptidylproline (omega=180) = [protein]-peptidylproline (omega=0). Involved in protein export. Acts as a chaperone by maintaining the newly synthesized protein in an open conformation. Functions as a peptidyl-prolyl cis-trans isomerase. This Mesorhizobium japonicum (strain LMG 29417 / CECT 9101 / MAFF 303099) (Mesorhizobium loti (strain MAFF 303099)) protein is Trigger factor.